The chain runs to 490 residues: ATP-dependent 6-phosphofructokinase (490 aa).

Residues Gly109, 175-176 (RG), and 200-203 (GDGT) contribute to the ATP site. A Mg(2+)-binding site is contributed by Asp201. Residues 229-231 (TID), 274-276 (MGR), Glu327, and 383-386 (YMIR) each bind substrate. The active-site Proton acceptor is the Asp231. The Peroxisomal targeting signal signature appears at 488–490 (SKL).

It belongs to the phosphofructokinase type A (PFKA) family. PPi-dependent PFK group II subfamily. Atypical ATP-dependent clade 'X' sub-subfamily. Homotetramer. The cofactor is Mg(2+).

Its subcellular location is the glycosome. It catalyses the reaction beta-D-fructose 6-phosphate + ATP = beta-D-fructose 1,6-bisphosphate + ADP + H(+). Its pathway is carbohydrate degradation; glycolysis; D-glyceraldehyde 3-phosphate and glycerone phosphate from D-glucose: step 3/4. Its activity is regulated as follows. Allosterically activated by AMP. Its function is as follows. Catalyzes the phosphorylation of D-fructose 6-phosphate to fructose 1,6-bisphosphate by ATP, the first committing step of glycolysis. This chain is ATP-dependent 6-phosphofructokinase, found in Trypanoplasma borreli.